A 424-amino-acid chain; its full sequence is Glutamyl-tRNA reductase (424 aa).

Residues 49–52 (TCNR), Ser105, 110–112 (EPQ), and Gln116 contribute to the substrate site. The active-site Nucleophile is the Cys50. 185–190 (GSGETA) is an NADP(+) binding site.

This sequence belongs to the glutamyl-tRNA reductase family. As to quaternary structure, homodimer.

The catalysed reaction is (S)-4-amino-5-oxopentanoate + tRNA(Glu) + NADP(+) = L-glutamyl-tRNA(Glu) + NADPH + H(+). It participates in porphyrin-containing compound metabolism; protoporphyrin-IX biosynthesis; 5-aminolevulinate from L-glutamyl-tRNA(Glu): step 1/2. In terms of biological role, catalyzes the NADPH-dependent reduction of glutamyl-tRNA(Glu) to glutamate 1-semialdehyde (GSA). The chain is Glutamyl-tRNA reductase from Legionella pneumophila (strain Corby).